Here is a 264-residue protein sequence, read N- to C-terminus: Indole-3-glycerol phosphate synthase (264 aa).

Belongs to the TrpC family.

It carries out the reaction 1-(2-carboxyphenylamino)-1-deoxy-D-ribulose 5-phosphate + H(+) = (1S,2R)-1-C-(indol-3-yl)glycerol 3-phosphate + CO2 + H2O. It participates in amino-acid biosynthesis; L-tryptophan biosynthesis; L-tryptophan from chorismate: step 4/5. The protein is Indole-3-glycerol phosphate synthase of Azoarcus sp. (strain BH72).